Here is a 147-residue protein sequence, read N- to C-terminus: MSPTRDELLCTALDFVAQFAKLDPESVLSFLSPSCTLRSFPSSLGKPPLQTKEESKADFQGLKDFFHNFQLRVKDGAEPVVDEPARKVVLHIEGKGDSLVGRFETEYIYILQMNEEGTMVEDFFQFADSATRDAWGKKIEAHFSAKN.

It belongs to the trt14 isomerase family. As to quaternary structure, homodimer.

It functions in the pathway secondary metabolite biosynthesis; terpenoid biosynthesis. In terms of biological role, part of the gene cluster B that mediates the biosynthesis of the fungal meroterpenoid acetoxydehydroaustin. The first step of the pathway is the synthesis of 3,5-dimethylorsellinic acid by the polyketide synthase ausA. 3,5-dimethylorsellinic acid is then prenylated by the polyprenyl transferase ausN. Further epoxidation by the FAD-dependent monooxygenase ausM and cyclization by the probable terpene cyclase ausL lead to the formation of protoaustinoid A. Protoaustinoid A is then oxidized to spiro-lactone preaustinoid A3 by the combined action of the FAD-binding monooxygenases ausB and ausC, and the dioxygenase ausE. Acid-catalyzed keto-rearrangement and ring contraction of the tetraketide portion of preaustinoid A3 by ausJ lead to the formation of preaustinoid A4. The aldo-keto reductase ausK, with the help of ausH, is involved in the next step by transforming preaustinoid A4 into isoaustinone which is in turn hydroxylated by the P450 monooxygenase ausI to form austinolide. The cytochrome P450 monooxygenase ausG then modifies austinolide to austinol. Austinol is further acetylated to austin by the O-acetyltransferase ausP, which spontaneously changes to dehydroaustin. The cytochrome P450 monooxygenase then converts dehydroaustin is into 7-dehydrodehydroaustin. The hydroxylation catalyzed by ausR permits the second O-acetyltransferase ausQ to add an additional acetyl group to the molecule, leading to the formation of acetoxydehydroaustin. Due to genetic rearrangements of the clusters and the subsequent loss of some enzymes, the end product of the Penicillium brasilianum austinoid biosynthesis clusters is acetoxydehydroaustin. In Penicillium brasilianum, this protein is Austinoid biosynthesis clusters protein H.